A 3993-amino-acid polypeptide reads, in one-letter code: Intermembrane lipid transfer protein VPS13B (3993 aa).

The Chorein N-terminal domain maps to 2–102; that stretch reads LESYVTPILM…KDGIQDDHES (101 aa). A disordered region spans residues 100–133; the sequence is HESCGSNSTNRSTAENTKSSIKPRRIQQAAPADP. A compositionally biased stretch (polar residues) spans 103 to 119; that stretch reads CGSNSTNRSTAENTKSS. Residues Ser-413, Ser-998, Ser-1001, and Ser-1032 each carry the phosphoserine modification. Disordered stretches follow at residues 1262 to 1303, 1616 to 1637, and 1735 to 1770; these read SPVW…PFSD, DQLK…ERNS, and TKAT…DSGI. Positions 1264–1291 are enriched in polar residues; it reads VWSSVGTAPPDTSTCSPSADIGTTTEGD. The span at 1739–1750 shows a compositional bias: basic and acidic residues; sequence EISKQEQKKVDT. The span at 1756-1770 shows a compositional bias: polar residues; that stretch reads AETSSRYSGAQDSGI. Ser-1789 carries the post-translational modification Phosphoserine. Residues 2048 to 2067 form a disordered region; the sequence is HSSAHSKETSTPSDSILNMD. Residues 2604–2683 enclose the SHR-BD domain; it reads HFVICNDTQE…TIQYKGRTAS (80 aa). A localizes the protein to the Golgi apparatus region spans residues 3880–3993; that stretch reads AFPITEISCA…KNKALRKGFS (114 aa).

The protein belongs to the VPS13 family. As to quaternary structure, interacts with STX6. Interacts with STX12 (via N-terminus). Interacts with RAB6A isoform 1 (GTP-bound) and isoform 2 (GTP-bound). Interacts with RAB6B (GTP-bound). In terms of tissue distribution, ubiquitously expressed in all examined tissues.

The protein resides in the recycling endosome membrane. It localises to the cytoplasmic vesicle. It is found in the secretory vesicle. Its subcellular location is the acrosome membrane. The protein localises to the golgi apparatus. The protein resides in the cis-Golgi network membrane. It localises to the endoplasmic reticulum-Golgi intermediate compartment membrane. It is found in the trans-Golgi network membrane. Its subcellular location is the early endosome membrane. The protein localises to the lysosome membrane. Mediates the transfer of lipids between membranes at organelle contact sites. Binds phosphatidylinositol 3-phosphate. Functions as a tethering factor in the slow endocytic recycling pathway, to assist traffic between early and recycling endosomes. Involved in the transport of proacrosomal vesicles to the nuclear dense lamina (NDL) during spermatid development. Plays a role in the assembly of the Golgi apparatus, possibly by mediating trafficking to the Golgi membrane. Plays a role in the development of the nervous system, and may be required for neuron projection development. May also play a role during adipose tissue development. Required for maintenance of the ocular lens. Required for proper organization of the Golgi. The sequence is that of Intermembrane lipid transfer protein VPS13B from Mus musculus (Mouse).